The chain runs to 87 residues: MKKAVLLATVFCGVVGLTSCCRIVDCCFEDPCAPKPCNPCGNKKDKGCSPCGVYTPSCSKPCGSECNPGVQGPQAKGCTSLDGRCKQ.

An N-terminal signal peptide occupies residues 1–19 (MKKAVLLATVFCGVVGLTS). Residue cysteine 20 is the site of N-palmitoyl cysteine attachment. Cysteine 20 carries the S-diacylglycerol cysteine lipid modification.

In terms of assembly, part of a disulfide cross-linked outer membrane complex (COMC) composed of the major outer membrane porin (MOMP), the small cysteine-rich protein (omcA) and the large cysteine-rich periplasmic protein (omcB). N-terminal amide-linked and S-diacylglycerol cysteine-linked to 16:0, 18:0, 15:0 branched, and 17:0 branched fatty acids (ratio 6:5:3:4) in the EB stage. The exact distribution of fatty acids has not been determined. In terms of processing, the N-terminus is blocked.

The protein resides in the cell outer membrane. In elementary bodies (EBs, the infectious stage, which is able to survive outside the host cell) provides the structural integrity of the outer envelope through disulfide cross-links with the large cysteine-rich periplasmic protein and the major outer membrane porin. It has been described in publications as the Sarkosyl-insoluble COMC (Chlamydia outer membrane complex), and serves as the functional equivalent of peptidoglycan. This chain is Small cysteine-rich outer membrane protein omcA (omcA), found in Chlamydia psittaci (Chlamydophila psittaci).